Reading from the N-terminus, the 130-residue chain is Small ribosomal subunit protein uS8 (130 aa).

This sequence belongs to the universal ribosomal protein uS8 family. In terms of assembly, part of the 30S ribosomal subunit.

Its function is as follows. One of the primary rRNA binding proteins, it binds directly to 16S rRNA central domain where it helps coordinate assembly of the platform of the 30S subunit. The chain is Small ribosomal subunit protein uS8 from Methanococcoides burtonii (strain DSM 6242 / NBRC 107633 / OCM 468 / ACE-M).